Here is a 199-residue protein sequence, read N- to C-terminus: Acireductone dioxygenase 1 (199 aa).

Histidine 99, histidine 101, glutamate 105, and histidine 144 together coordinate Fe(2+). Ni(2+) is bound by residues histidine 99, histidine 101, glutamate 105, and histidine 144.

The protein belongs to the acireductone dioxygenase (ARD) family. The cofactor is Fe(2+). Ni(2+) is required as a cofactor.

It is found in the cytoplasm. The protein resides in the nucleus. It carries out the reaction 1,2-dihydroxy-5-(methylsulfanyl)pent-1-en-3-one + O2 = 4-methylsulfanyl-2-oxobutanoate + formate + 2 H(+). The catalysed reaction is 1,2-dihydroxy-5-(methylsulfanyl)pent-1-en-3-one + O2 = 3-(methylsulfanyl)propanoate + CO + formate + 2 H(+). The protein operates within amino-acid biosynthesis; L-methionine biosynthesis via salvage pathway; L-methionine from S-methyl-5-thio-alpha-D-ribose 1-phosphate: step 5/6. Catalyzes 2 different reactions between oxygen and the acireductone 1,2-dihydroxy-3-keto-5-methylthiopentene (DHK-MTPene) depending upon the metal bound in the active site. Fe-containing acireductone dioxygenase (Fe-ARD) produces formate and 2-keto-4-methylthiobutyrate (KMTB), the alpha-ketoacid precursor of methionine in the methionine recycle pathway. Ni-containing acireductone dioxygenase (Ni-ARD) produces methylthiopropionate, carbon monoxide and formate, and does not lie on the methionine recycle pathway. The chain is Acireductone dioxygenase 1 (ARD1) from Oryza sativa subsp. indica (Rice).